A 276-amino-acid chain; its full sequence is Small ribosomal subunit protein uS5w (276 aa).

Residues 1–15 (MAERGVERGGDRGDF) are compositionally biased toward basic and acidic residues. Residues 1-42 (MAERGVERGGDRGDFGRGFGGRGGGRGGPRGRGRRAGRAPEE) form a disordered region. The span at 16-28 (GRGFGGRGGGRGG) shows a compositional bias: gly residues. The 64-residue stretch at 87–150 (LKDEVMKIMP…ILAKLSVVPI (64 aa)) folds into the S5 DRBM domain.

The protein belongs to the universal ribosomal protein uS5 family.

The chain is Small ribosomal subunit protein uS5w (RPS2D) from Arabidopsis thaliana (Mouse-ear cress).